Reading from the N-terminus, the 96-residue chain is UPF0235 protein Sputcn32_2690 (96 aa).

The protein belongs to the UPF0235 family.

This is UPF0235 protein Sputcn32_2690 from Shewanella putrefaciens (strain CN-32 / ATCC BAA-453).